The primary structure comprises 73 residues: Conotoxin ArMKLT2-022 (73 aa).

The first 22 residues, 1–22 (MKLTCVLIIAVLFLTACQLTTG), serve as a signal peptide directing secretion. Residues 23–40 (EQKDHAQRSADRNSKLTR) constitute a propeptide that is removed on maturation. Gln41 is subject to Pyrrolidone carboxylic acid. 3 cysteine pairs are disulfide-bonded: Cys42–Cys56, Cys49–Cys60, and Cys55–Cys67.

It belongs to the conotoxin O1 superfamily. Expressed by the venom duct.

It localises to the secreted. The protein is Conotoxin ArMKLT2-022 of Conus arenatus (Sand-dusted cone).